We begin with the raw amino-acid sequence, 226 residues long: Putative ABC transporter ATP-binding protein BQ02700 (226 aa).

Residues 4–225 (IKFDKVTQVF…VAIKEYIRRM (222 aa)) form the ABC transporter domain. 35–42 (GANGSGKS) is a binding site for ATP.

This sequence belongs to the ABC transporter superfamily.

The protein resides in the cell inner membrane. Probably part of an ABC transporter complex. Responsible for energy coupling to the transport system. The polypeptide is Putative ABC transporter ATP-binding protein BQ02700 (Bartonella quintana (strain Toulouse) (Rochalimaea quintana)).